A 36-amino-acid chain; its full sequence is Potassium channel toxin alpha-KTx 23.1 (36 aa).

Cystine bridges form between C6–C26, C12–C31, C16–C33, and C21–C36. At C36 the chain carries Cysteine amide.

The protein belongs to the short scorpion toxin superfamily. Potassium channel inhibitor family. Alpha-KTx 23 subfamily. As to expression, expressed by the venom gland.

The protein localises to the secreted. In terms of biological role, voltage-gated potassium channel inhibitor. Selectively and irreversibly binds (K(d)=2.9 pM) and blocks hKv1.3/KCNA3 potassium channels of human T-lymphocytes. Weakly blocks hKCa3.1/KCNN4, mKv1.1/KCNA1, and hKv1.2/KCNA2 channels. In vivo, high doses (200 ug) produce no symptoms of intoxication when injected into mice. The chain is Potassium channel toxin alpha-KTx 23.1 from Vaejovis mexicanus smithi (Mexican scorpion).